A 224-amino-acid polypeptide reads, in one-letter code: UPF0758 protein PLES_57141 (224 aa).

The MPN domain occupies 102-224 (ILESPQAVRD…PLSLAEYGWL (123 aa)). Zn(2+) is bound by residues His173, His175, and Asp186. The JAMM motif motif lies at 173 to 186 (HNHPSGDARPSLAD).

This sequence belongs to the UPF0758 family.

The chain is UPF0758 protein PLES_57141 from Pseudomonas aeruginosa (strain LESB58).